An 861-amino-acid chain; its full sequence is Probable beta-glucosidase A (861 aa).

A signal peptide spans 1-19; the sequence is MKLSILEAAALTAASVVSA. Residues N62, N212, and N253 are each glycosylated (N-linked (GlcNAc...) asparagine). D281 is a catalytic residue. 8 N-linked (GlcNAc...) asparagine glycosylation sites follow: N316, N323, N355, N524, N543, N565, N669, and N713. Positions 735 to 754 are disordered; sequence PEGATDGSPQPRLPASGGPG.

This sequence belongs to the glycosyl hydrolase 3 family.

The protein resides in the secreted. It catalyses the reaction Hydrolysis of terminal, non-reducing beta-D-glucosyl residues with release of beta-D-glucose.. It functions in the pathway glycan metabolism; cellulose degradation. In terms of biological role, beta-glucosidases are one of a number of cellulolytic enzymes involved in the degradation of cellulosic biomass. Catalyzes the last step releasing glucose from the inhibitory cellobiose. The chain is Probable beta-glucosidase A (bglA) from Aspergillus terreus (strain NIH 2624 / FGSC A1156).